The primary structure comprises 243 residues: Probable transcriptional regulatory protein LJ_0904 (243 aa).

The segment at 1-22 (MSGHSKWHNIQGRKNAQDAKRG) is disordered.

Belongs to the TACO1 family.

It localises to the cytoplasm. This is Probable transcriptional regulatory protein LJ_0904 from Lactobacillus johnsonii (strain CNCM I-12250 / La1 / NCC 533).